The sequence spans 189 residues: Phosphoheptose isomerase (189 aa).

In terms of domain architecture, SIS spans 34–189 (LVEAFRKGNK…CDLVEKALFA (156 aa)). 49 to 51 (NGG) is a substrate binding site. H58 and E62 together coordinate Zn(2+). Substrate is bound by residues E62, 91–92 (ND), 117–119 (STS), S122, and Q169. Positions 169 and 177 each coordinate Zn(2+).

The protein belongs to the SIS family. GmhA subfamily. In terms of assembly, homotetramer. The cofactor is Zn(2+).

The protein localises to the cytoplasm. It catalyses the reaction 2 D-sedoheptulose 7-phosphate = D-glycero-alpha-D-manno-heptose 7-phosphate + D-glycero-beta-D-manno-heptose 7-phosphate. It participates in carbohydrate biosynthesis; D-glycero-D-manno-heptose 7-phosphate biosynthesis; D-glycero-alpha-D-manno-heptose 7-phosphate and D-glycero-beta-D-manno-heptose 7-phosphate from sedoheptulose 7-phosphate: step 1/1. Functionally, catalyzes the isomerization of sedoheptulose 7-phosphate in D-glycero-D-manno-heptose 7-phosphate. This chain is Phosphoheptose isomerase, found in Pelobacter propionicus (strain DSM 2379 / NBRC 103807 / OttBd1).